The sequence spans 267 residues: Imidazole glycerol phosphate synthase subunit HisF (267 aa).

Residues Asp-22 and Asp-141 contribute to the active site.

It belongs to the HisA/HisF family. As to quaternary structure, heterodimer of HisH and HisF.

The protein localises to the cytoplasm. The catalysed reaction is 5-[(5-phospho-1-deoxy-D-ribulos-1-ylimino)methylamino]-1-(5-phospho-beta-D-ribosyl)imidazole-4-carboxamide + L-glutamine = D-erythro-1-(imidazol-4-yl)glycerol 3-phosphate + 5-amino-1-(5-phospho-beta-D-ribosyl)imidazole-4-carboxamide + L-glutamate + H(+). It functions in the pathway amino-acid biosynthesis; L-histidine biosynthesis; L-histidine from 5-phospho-alpha-D-ribose 1-diphosphate: step 5/9. Functionally, IGPS catalyzes the conversion of PRFAR and glutamine to IGP, AICAR and glutamate. The HisF subunit catalyzes the cyclization activity that produces IGP and AICAR from PRFAR using the ammonia provided by the HisH subunit. The sequence is that of Imidazole glycerol phosphate synthase subunit HisF from Mycobacterium tuberculosis (strain ATCC 25177 / H37Ra).